The primary structure comprises 117 residues: Elafin (117 aa).

A signal peptide spans 1 to 22; it reads MRASSFLIVVVFLIAGTLVLEA. Positions 23-60 are excised as a propeptide; it reads AVTGVPVKGQDTVKGRVPFNGQDPVKGQVSVKGQDKVK. SVP-1 clotting repeat units follow at residues 29-54 and 55-72; these read VKGQDTVKGRVPFNGQDPVKGQVSVK and GQDKVKAQEPVKGPVSTK. The interval 29–72 is 2 X tandem repeats of SVP-1 like motif; that stretch reads VKGQDTVKGRVPFNGQDPVKGQVSVKGQDKVKAQEPVKGPVSTK. The 49-residue stretch at 69 to 117 folds into the WAP domain; sequence VSTKPGSCPIILIRCAMLNPPNRCLKDTDCPGIKKCCEGSCGMACFVPQ. 4 disulfides stabilise this stretch: cysteine 76–cysteine 105, cysteine 83–cysteine 109, cysteine 92–cysteine 104, and cysteine 98–cysteine 113.

It localises to the secreted. Functionally, neutrophil and pancreatic elastase-specific inhibitor of skin. It may prevent elastase-mediated tissue proteolysis. Has been shown to inhibit the alpha-4-beta-2/CHRNA2-CHRNB2 nicotinic acetylcholine receptor and to produce a weak inhibition on Kv11.1/KCNH2/ERG1 and on the transient receptor potential cation channel subfamily V member 1 (TRPV1). The polypeptide is Elafin (PI3) (Homo sapiens (Human)).